Consider the following 451-residue polypeptide: tRNA-2-methylthio-N(6)-dimethylallyladenosine synthase (451 aa).

The 117-residue stretch at 5 to 121 (RQYHITTFGC…LQDLLEQVEG (117 aa)) folds into the MTTase N-terminal domain. Residues Cys14, Cys50, Cys84, Cys156, Cys160, and Cys163 each contribute to the [4Fe-4S] cluster site. Residues 142–379 (RDSTVTAWVN…NHLVAQKAAE (238 aa)) enclose the Radical SAM core domain. The TRAM domain maps to 382 to 446 (QRYAGRIEEV…AFSLTGEAVE (65 aa)).

The protein belongs to the methylthiotransferase family. MiaB subfamily. Monomer. [4Fe-4S] cluster is required as a cofactor.

It is found in the cytoplasm. It carries out the reaction N(6)-dimethylallyladenosine(37) in tRNA + (sulfur carrier)-SH + AH2 + 2 S-adenosyl-L-methionine = 2-methylsulfanyl-N(6)-dimethylallyladenosine(37) in tRNA + (sulfur carrier)-H + 5'-deoxyadenosine + L-methionine + A + S-adenosyl-L-homocysteine + 2 H(+). Its function is as follows. Catalyzes the methylthiolation of N6-(dimethylallyl)adenosine (i(6)A), leading to the formation of 2-methylthio-N6-(dimethylallyl)adenosine (ms(2)i(6)A) at position 37 in tRNAs that read codons beginning with uridine. This Picosynechococcus sp. (strain ATCC 27264 / PCC 7002 / PR-6) (Agmenellum quadruplicatum) protein is tRNA-2-methylthio-N(6)-dimethylallyladenosine synthase.